We begin with the raw amino-acid sequence, 383 residues long: Adaptive-response sensory kinase SasA (383 aa).

The Histidine kinase domain maps to 161-383 (MLAHDLRSPL…SFHFTLPVYR (223 aa)). A Phosphohistidine; by autocatalysis modification is found at His164.

In terms of assembly, homooligomerizes. Interacts with KaiC1. Interacts with KaiC1 and RpaA. Binds to the B-loop in the CI domain of KaiC; SasA and KaiB compete to bind to the CI domain.

It catalyses the reaction ATP + protein L-histidine = ADP + protein N-phospho-L-histidine.. Functionally, member of the two-component regulatory system SasA/RpaA involved in genome-wide circadian gene expression. One of several clock output pathways. Participates in the Kai clock protein complex, the main circadian regulator in cyanobacteria, via its interaction with KaiC. KaiC enhances the autophosphorylation activity of SasA, which then transfers its phosphate group to RpaA to activate it. In addition to its output function, recruits fold-shifted KaiB (KaiB(fs)) to KaiC to cooperatively form the KaiB(6):KaiC(6) complex (independent of SasA kinase activity). Required for robustness of the circadian rhythm of gene expression and is involved in clock output, also required for adaptation to light/dark cycles. Plays an important role in glucose metabolism, important for expression of genes involved in glycolysis, gluconeogenesis, the oxidative pentose phosphate pathway, and glycogen metabolism. Required for heterotrophic growth. Overexpression from the psbAII promoter leads to altered levels of genes involved in carbon metabolism, increased levels of transcripts for clock oscillator genes in the light and the dark, complete loss of glycogen accumulation, decreased levels of metabolites of sugar catabolism and increased levels of amino acids in the light and increased levels of SigE protein. This chain is Adaptive-response sensory kinase SasA, found in Synechocystis sp. (strain ATCC 27184 / PCC 6803 / Kazusa).